Here is a 352-residue protein sequence, read N- to C-terminus: DNA-directed RNA polymerase subunit alpha (352 aa).

The tract at residues 1-236 (MTVNIRNWQE…DQLQVFVHFE (236 aa)) is alpha N-terminal domain (alpha-NTD). The alpha C-terminal domain (alpha-CTD) stretch occupies residues 257-352 (SDVNQLNRFL…AKKLEQELLG (96 aa)).

This sequence belongs to the RNA polymerase alpha chain family. Homodimer. The RNAP catalytic core consists of 2 alpha, 1 beta, 1 beta' and 1 omega subunit. When a sigma factor is associated with the core the holoenzyme is formed, which can initiate transcription.

The catalysed reaction is RNA(n) + a ribonucleoside 5'-triphosphate = RNA(n+1) + diphosphate. Functionally, DNA-dependent RNA polymerase catalyzes the transcription of DNA into RNA using the four ribonucleoside triphosphates as substrates. The polypeptide is DNA-directed RNA polymerase subunit alpha (Sphingopyxis alaskensis (strain DSM 13593 / LMG 18877 / RB2256) (Sphingomonas alaskensis)).